Here is a 678-residue protein sequence, read N- to C-terminus: Protein MALE DISCOVERER 2 (678 aa).

The N-terminal stretch at 1-25 (MMGCGFHFPWFFFLIIGLQAPLSLS) is a signal peptide. The Extracellular segment spans residues 26–323 (LTSQGSALLK…SKGSKHVWLY (298 aa)). N-linked (GlcNAc...) asparagine glycosylation is present at Asn52. 4 LRR repeats span residues 71 to 94 (KVQI…SQLS), 95 to 117 (DLRS…YGSF), 119 to 141 (NLEV…LSNG), and 143 to 164 (SLKH…KIVR). Residues 247 to 314 (LAAEPAPSAP…KNQPQDNKQS (68 aa)) are disordered. The segment covering 296–311 (KGSTSPDISKNQPQDN) has biased composition (polar residues). The helical transmembrane segment at 324-344 (VVIAVASFVGLLIIVAVIFFC) threads the bilayer. Over 345 to 678 (RKRAVKSIGP…ELEILSSEAT (334 aa)) the chain is Cytoplasmic. The Protein kinase domain occupies 346-651 (KRAVKSIGPW…DVAEQLKQVI (306 aa)).

It belongs to the protein kinase superfamily. Ser/Thr protein kinase family. In terms of tissue distribution, expressed in pollen tubes and seedlings.

The protein resides in the endomembrane system. It carries out the reaction L-seryl-[protein] + ATP = O-phospho-L-seryl-[protein] + ADP + H(+). The enzyme catalyses L-threonyl-[protein] + ATP = O-phospho-L-threonyl-[protein] + ADP + H(+). Involved in the pollen tube perception of the female signal by binding an unidentified female attractant. May be involved in the regulation of root hairs development. This is Protein MALE DISCOVERER 2 (MDIS2) from Arabidopsis thaliana (Mouse-ear cress).